The chain runs to 75 residues: Dermaseptin-SP4 (75 aa).

Positions methionine 1–cysteine 22 are cleaved as a signal peptide. Residues glutamate 23–arginine 45 constitute a propeptide that is removed on maturation. Proline 72 bears the Proline amide mark. The propeptide occupies glutamate 74–glutamine 75.

This sequence belongs to the frog skin active peptide (FSAP) family. Dermaseptin subfamily. As to expression, expressed by the skin glands.

Its subcellular location is the secreted. It localises to the target cell membrane. In terms of biological role, antimicrobial peptide with activity against Gram-positive and Gram-negative bacteria and fungi. Has been tested against E.coli (MIC=47.25-128 uM), S.aureus (MIC=189-512 uM), K.pneumoniae (MIC=189 uM) and C.albicans (MIC&gt;189 uM). Probably acts by disturbing membrane functions with its alpha-helical amphipathic structure. May penetrate bacterial membranes, but stay at the mammalian membrane surface. Shows a weak hemolytic activity. The sequence is that of Dermaseptin-SP4 from Agalychnis spurrelli (Gliding leaf frog).